Reading from the N-terminus, the 498-residue chain is E3 ubiquitin-protein ligase TRIM22 (498 aa).

The RING-type zinc-finger motif lies at cysteine 15–glutamine 60. The segment at glutamine 92–isoleucine 133 adopts a B box-type zinc-finger fold. Zn(2+)-binding residues include cysteine 97, histidine 100, cysteine 119, and histidine 125. A coiled-coil region spans residues arginine 132 to methionine 248. A Nuclear localization signal motif is present at residues lysine 257–lysine 275. The 216-residue stretch at leucine 283–serine 498 folds into the B30.2/SPRY domain.

The protein belongs to the TRIM/RBCC family. Homotrimer. As to quaternary structure, (Microbial infection) Interacts with HIV-1 Gag polyprotein; this interaction seems to reduce gag production or virus budding. In terms of assembly, (Microbial infection) Interacts with EMCV protease 3C; this interaction leads to viral protease ubiquitination. Post-translationally, auto-ubiquitinated. As to expression, strongly expressed in peripheral blood leukocytes, spleen, thymus, and ovary. Expressed at basal levels in other tissues.

Its subcellular location is the cytoplasm. The protein localises to the nucleus. It localises to the nucleus speckle. The protein resides in the cajal body. It carries out the reaction S-ubiquitinyl-[E2 ubiquitin-conjugating enzyme]-L-cysteine + [acceptor protein]-L-lysine = [E2 ubiquitin-conjugating enzyme]-L-cysteine + N(6)-ubiquitinyl-[acceptor protein]-L-lysine.. It functions in the pathway protein modification; protein ubiquitination. Its function is as follows. Interferon-induced E3 ubiquitin ligase that plays important roles in innate and adaptive immunity. Restricts the replication of many viruses including HIV-1, encephalomyocarditis virus (EMCV), hepatitis B virus (HBV), hepatitis C virus (HCV) or Zika virus (ZIKV). Mechanistically, negatively regulates HCV replication by promoting ubiquitination and subsequent degradation of viral NS5A. Also acts by promoting the degradation of Zika virus NS1 and NS3 proteins through proteasomal degradation. Acts as a suppressor of basal HIV-1 LTR-driven transcription by preventing Sp1 binding to the HIV-1 promoter. Also plays a role in antiviral immunity by co-regulating together with NT5C2 the RIGI/NF-kappa-B pathway by promoting 'Lys-63'-linked ubiquitination of RIGI, while NT5C2 is responsible for 'Lys-48'-linked ubiquitination of RIGI. Participates in adaptive immunity by suppressing the amount of MHC class II protein in a negative feedback manner in order to limit the extent of MHC class II induction. The chain is E3 ubiquitin-protein ligase TRIM22 (TRIM22) from Homo sapiens (Human).